A 147-amino-acid polypeptide reads, in one-letter code: Deoxyuridine 5'-triphosphate nucleotidohydrolase (147 aa).

Substrate-binding positions include 63–65 (RSG), N76, and 80–82 (TID).

The protein belongs to the dUTPase family. Requires Mg(2+) as cofactor.

It carries out the reaction dUTP + H2O = dUMP + diphosphate + H(+). It functions in the pathway pyrimidine metabolism; dUMP biosynthesis; dUMP from dCTP (dUTP route): step 2/2. Its function is as follows. This enzyme is involved in nucleotide metabolism: it produces dUMP, the immediate precursor of thymidine nucleotides and it decreases the intracellular concentration of dUTP so that uracil cannot be incorporated into DNA. This is Deoxyuridine 5'-triphosphate nucleotidohydrolase from Chlamydia felis (strain Fe/C-56) (Chlamydophila felis).